Consider the following 270-residue polypeptide: Formamidopyrimidine-DNA glycosylase (270 aa).

The Schiff-base intermediate with DNA role is filled by P2. E3 acts as the Proton donor in catalysis. Residue K58 is the Proton donor; for beta-elimination activity of the active site. DNA is bound by residues H91, R110, and R151. The FPG-type zinc-finger motif lies at 236–270 (LVYGRDGLPCPNCGRALKHATIGQRASVWCSHCQR). Catalysis depends on R260, which acts as the Proton donor; for delta-elimination activity.

The protein belongs to the FPG family. As to quaternary structure, monomer. Requires Zn(2+) as cofactor.

The enzyme catalyses Hydrolysis of DNA containing ring-opened 7-methylguanine residues, releasing 2,6-diamino-4-hydroxy-5-(N-methyl)formamidopyrimidine.. It carries out the reaction 2'-deoxyribonucleotide-(2'-deoxyribose 5'-phosphate)-2'-deoxyribonucleotide-DNA = a 3'-end 2'-deoxyribonucleotide-(2,3-dehydro-2,3-deoxyribose 5'-phosphate)-DNA + a 5'-end 5'-phospho-2'-deoxyribonucleoside-DNA + H(+). In terms of biological role, involved in base excision repair of DNA damaged by oxidation or by mutagenic agents. Acts as a DNA glycosylase that recognizes and removes damaged bases. Has a preference for oxidized purines, such as 7,8-dihydro-8-oxoguanine (8-oxoG). Has AP (apurinic/apyrimidinic) lyase activity and introduces nicks in the DNA strand. Cleaves the DNA backbone by beta-delta elimination to generate a single-strand break at the site of the removed base with both 3'- and 5'-phosphates. In Stenotrophomonas maltophilia (strain K279a), this protein is Formamidopyrimidine-DNA glycosylase.